The chain runs to 160 residues: Nutritionally-regulated adipose and cardiac enriched protein homolog (160 aa).

The disordered stretch occupies residues 1 to 69 (MRTAAGAVSP…AKPQRTSRRV (69 aa)). Composition is skewed to basic and acidic residues over residues 12-25 (SRPETRRQTRKNEE) and 33-42 (CRAEREDNRK). A helical membrane pass occupies residues 101–121 (GGSLLLQLCVCVLLVLALGLY).

The protein localises to the cell membrane. The chain is Nutritionally-regulated adipose and cardiac enriched protein homolog (NRAC) from Homo sapiens (Human).